A 381-amino-acid polypeptide reads, in one-letter code: Flap endonuclease 1 (381 aa).

An N-domain region spans residues 1-105; sequence MGIKGLNSII…HELDKRTSRR (105 aa). Asp-34 serves as a coordination point for Mg(2+). DNA-binding residues include Arg-47 and Arg-71. Residues Asp-87, Glu-156, Glu-158, Asp-177, and Asp-179 each contribute to the Mg(2+) site. An I-domain region spans residues 120-251; it reads EKMKHERRLV…VTALKLMKEH (132 aa). Glu-156 is a binding site for DNA. Residues Gly-229 and Asp-231 each contribute to the DNA site. Asp-231 contributes to the Mg(2+) binding site. The tract at residues 338-346 is interaction with PCNA; it reads VQGRLDGFF.

This sequence belongs to the XPG/RAD2 endonuclease family. FEN1 subfamily. In terms of assembly, interacts with PCNA. Three molecules of FEN1 bind to one PCNA trimer with each molecule binding to one PCNA monomer. PCNA stimulates the nuclease activity without altering cleavage specificity. Requires Mg(2+) as cofactor. Phosphorylated. Phosphorylation upon DNA damage induces relocalization to the nuclear plasma.

Its subcellular location is the nucleus. It localises to the nucleolus. The protein resides in the nucleoplasm. The protein localises to the mitochondrion. Functionally, structure-specific nuclease with 5'-flap endonuclease and 5'-3' exonuclease activities involved in DNA replication and repair. During DNA replication, cleaves the 5'-overhanging flap structure that is generated by displacement synthesis when DNA polymerase encounters the 5'-end of a downstream Okazaki fragment. It enters the flap from the 5'-end and then tracks to cleave the flap base, leaving a nick for ligation. Also involved in the long patch base excision repair (LP-BER) pathway, by cleaving within the apurinic/apyrimidinic (AP) site-terminated flap. Acts as a genome stabilization factor that prevents flaps from equilibrating into structures that lead to duplications and deletions. Also possesses 5'-3' exonuclease activity on nicked or gapped double-stranded DNA, and exhibits RNase H activity. Also involved in replication and repair of rDNA and in repairing mitochondrial DNA. In Candida glabrata (strain ATCC 2001 / BCRC 20586 / JCM 3761 / NBRC 0622 / NRRL Y-65 / CBS 138) (Yeast), this protein is Flap endonuclease 1.